Consider the following 477-residue polypeptide: Epoxyalcohol synthase CYP5164B1 (477 aa).

Cysteine 421 contributes to the heme binding site.

This sequence belongs to the cytochrome P450 family. Heme is required as a cofactor.

The enzyme catalyses (9S)-hydroperoxy-(10E,12Z)-octadecadienoate = (11S)-hydroxy-(9S,10S)-epoxy-(12Z)-octadecenoate. It carries out the reaction (13S)-hydroperoxy-(9Z,11E)-octadecadienoate = 11-hydroxy-12,13-epoxy-(9Z)-octadecenoate. It functions in the pathway lipid metabolism; oxylipin biosynthesis. In terms of biological role, cytochrome P450 epoxyalcohol synthase involved in the metabolism of oxylipins 'ectocarpins' natural products, such as hybridalactone, ecklonilactones and derivatives. Isomerizes the hydroperoxides into epoxyalcohols via epoxyallylic radical. Can use linoleic acid 9-hydroperoxide ((9S,10E,12Z)-9-hydroperoxy-10,12-octadecadienoic, 9-HPOD) as preferred substrate to produce (9S,10S,11S,12Z)-9,10-epoxy-11-hydroxy-12-octadecenoic acid and, to a lower extent, active with linoleate 13-hydroperoxide ((9Z,11E,13S)-13-hydroperoxy-9,11-octadecadienoic, 13-HPOD) to produce 11-hydroxy-12,13-epoxy-9-octadecenoic acid. No activity toward alpha-linolenic acid 9- and 13-hydroperoxides, and toward eicosapentaenoic acid 15-hydroperoxide. This chain is Epoxyalcohol synthase CYP5164B1, found in Ectocarpus siliculosus (Brown alga).